The primary structure comprises 780 residues: E3 SUMO-protein ligase gei-17 (780 aa).

A disordered region spans residues 181-210 (APLHSSFPNHGRSSQQSLQKSEKSNRPKKM). Residues 203–367 (KSNRPKKMYA…AAGVYFVHRV (165 aa)) form the PINIT domain. Residues 400–485 (GEDDIAMDRL…LAKVDKNTTE (86 aa)) form an SP-RING-type zinc finger. Zn(2+)-binding residues include Cys-431, His-433, Cys-454, and Cys-457. The span at 519–530 (GTASCSSTNGNG) shows a compositional bias: polar residues. 3 disordered regions span residues 519–544 (GTAS…ADDD), 560–594 (IMNS…KTKD), and 732–755 (QQHH…SFYA). The segment covering 732–749 (QQHHLQQQQQQQQSPQIM) has biased composition (low complexity).

Belongs to the PIAS family. As to quaternary structure, may interact with gex-3.

The protein operates within protein modification; protein sumoylation. Functions as an E3-type smo-1 ligase. Mediates smo-1 conjugation to air-2 in vitro and is required for proper chromosome alignment. In the early embryo, specifically suppresses checkpoint activation in response to DNA damage, maybe by promoting mus-101 sumoylation. In embryos, plays a role in determining telomere localization in the nucleus. Acts with pie-1 to promote piRNA-mediated silencing and fertility in the adult germline. This chain is E3 SUMO-protein ligase gei-17, found in Caenorhabditis elegans.